Here is a 539-residue protein sequence, read N- to C-terminus: Protein Wnt-4 (539 aa).

An N-terminal signal peptide occupies residues methionine 1–glycine 21. The segment at glutamine 34–isoleucine 77 is disordered. Over residues glutamine 51 to asparagine 74 the composition is skewed to low complexity. 2 N-linked (GlcNAc...) asparagine glycosylation sites follow: asparagine 74 and asparagine 284. 5 disulfide bridges follow: cysteine 274–cysteine 285, cysteine 322–cysteine 330, cysteine 332–cysteine 349, cysteine 397–cysteine 411, and cysteine 399–cysteine 406. The O-palmitoleoyl serine; by PORCN moiety is linked to residue serine 403. Asparagine 419 is a glycosylation site (N-linked (GlcNAc...) asparagine). Residues alanine 436–serine 463 are disordered. Residues glutamine 439–serine 448 are compositionally biased toward low complexity. Residues arginine 449–proline 460 show a composition bias toward basic residues. Disulfide bonds link cysteine 478/cysteine 497, cysteine 486/cysteine 492, cysteine 496/cysteine 538, cysteine 512/cysteine 529, cysteine 514/cysteine 526, and cysteine 521/cysteine 522.

This sequence belongs to the Wnt family. In terms of processing, palmitoleoylated by porcupine. The lipid group functions as a sorting signal, targeting the ligand to polarized vesicles that transport Wnt4 to unique sites at the cell surface. Depalmitoleoylated by notum, leading to inhibit Wnt signaling pathway.

It is found in the secreted. The protein localises to the extracellular space. The protein resides in the extracellular matrix. Its function is as follows. Binds as a ligand to a family of frizzled seven-transmembrane receptors and acts through a cascade of genes on the nucleus. Acts downstream of homeotic complex genes in the visceral mesoderm and is required for embryonic segmentation. Also required for cell movement and FAK regulation during ovarian morphogenesis. The polypeptide is Protein Wnt-4 (Wnt4) (Drosophila melanogaster (Fruit fly)).